Reading from the N-terminus, the 477-residue chain is Maternal protein exuperantia-2 (477 aa).

Positions 196–209 are enriched in basic and acidic residues; sequence KDGNSTKEDEHENP. Disordered stretches follow at residues 196 to 226 and 384 to 477; these read KDGN…NQKQ and TIKP…FADI. The span at 385–402 shows a compositional bias: basic residues; that stretch reads IKPRCKRSGNGTRRRNRA.

Ensures the proper localization of the mRNA of the bicoid gene to the anterior regions of the oocyte thus playing a fundamental role in the establishment of the polarity of the oocyte. May bind the bcd mRNA. The protein is Maternal protein exuperantia-2 (exu2) of Drosophila pseudoobscura pseudoobscura (Fruit fly).